The following is a 257-amino-acid chain: Acyl-[acyl-carrier-protein]--UDP-N-acetylglucosamine O-acyltransferase (257 aa).

Belongs to the transferase hexapeptide repeat family. LpxA subfamily. Homotrimer.

Its subcellular location is the cytoplasm. The catalysed reaction is a (3R)-hydroxyacyl-[ACP] + UDP-N-acetyl-alpha-D-glucosamine = a UDP-3-O-[(3R)-3-hydroxyacyl]-N-acetyl-alpha-D-glucosamine + holo-[ACP]. Its pathway is glycolipid biosynthesis; lipid IV(A) biosynthesis; lipid IV(A) from (3R)-3-hydroxytetradecanoyl-[acyl-carrier-protein] and UDP-N-acetyl-alpha-D-glucosamine: step 1/6. Involved in the biosynthesis of lipid A, a phosphorylated glycolipid that anchors the lipopolysaccharide to the outer membrane of the cell. The protein is Acyl-[acyl-carrier-protein]--UDP-N-acetylglucosamine O-acyltransferase of Anaeromyxobacter sp. (strain K).